A 401-amino-acid chain; its full sequence is Large ribosomal subunit protein uL4 (401 aa).

Belongs to the universal ribosomal protein uL4 family.

This chain is Large ribosomal subunit protein uL4 (RpL4), found in Drosophila melanogaster (Fruit fly).